The sequence spans 300 residues: GTPase Era (300 aa).

Positions 7–182 (YCGFIAIVGR…LRKGVHHFPE (176 aa)) constitute an Era-type G domain. A G1 region spans residues 15–22 (GRPNVGKS). 15-22 (GRPNVGKS) is a GTP binding site. The tract at residues 41-45 (QTTRH) is G2. A G3 region spans residues 62–65 (DTPG). Residues 62 to 66 (DTPGL) and 124 to 127 (NKVD) each bind GTP. A G4 region spans residues 124-127 (NKVD). Residues 154 to 156 (ISA) form a G5 region. The KH type-2 domain maps to 206-283 (TGEELPYSVT…HLELWVKVKS (78 aa)).

The protein belongs to the TRAFAC class TrmE-Era-EngA-EngB-Septin-like GTPase superfamily. Era GTPase family. Monomer.

It is found in the cytoplasm. The protein localises to the cell inner membrane. Its function is as follows. An essential GTPase that binds both GDP and GTP, with rapid nucleotide exchange. Plays a role in 16S rRNA processing and 30S ribosomal subunit biogenesis and possibly also in cell cycle regulation and energy metabolism. This Histophilus somni (strain 129Pt) (Haemophilus somnus) protein is GTPase Era.